Consider the following 596-residue polypeptide: mRNA export factor mex67 (596 aa).

3 positions are modified to phosphoserine: serine 128, serine 130, and serine 133. LRR repeat units follow at residues aspartate 215–alanine 236, lysine 241–serine 262, and proline 263–threonine 282. Positions threonine 283 to isoleucine 338 constitute an LRRCT domain. The 162-residue stretch at isoleucine 338–isoleucine 499 folds into the NTF2 domain. Residues aspartate 543–serine 596 form the TAP-C domain.

The protein belongs to the NXF family. Interacts with mlo3 and rae1.

It is found in the nucleus. Its subcellular location is the cytoplasm. Functionally, involved in the export of mRNA from the nucleus to the cytoplasm. This Schizosaccharomyces pombe (strain 972 / ATCC 24843) (Fission yeast) protein is mRNA export factor mex67 (mex67).